A 504-amino-acid chain; its full sequence is Anaerobic nitric oxide reductase transcription regulator NorR (504 aa).

Residue Asp-57 is modified to 4-aspartylphosphate. The Sigma-54 factor interaction domain occupies 187–416 (MIGLSPGMTQ…LEHAIHRAVV (230 aa)). ATP-binding positions include 215–222 (GETGTGKE) and 278–287 (ADNGTLFLDE). Positions 479-498 (WAACARMLETDVANLHRLAK) form a DNA-binding region, H-T-H motif.

Its pathway is nitrogen metabolism; nitric oxide reduction. Functionally, required for the expression of anaerobic nitric oxide (NO) reductase, acts as a transcriptional activator for at least the norVW operon. Activation also requires sigma-54. The chain is Anaerobic nitric oxide reductase transcription regulator NorR from Escherichia coli O127:H6 (strain E2348/69 / EPEC).